The following is a 356-amino-acid chain: MGANVLIMAGGTGGHVFPALACAREFQARGYAVHWLGTPRGIENDLVPSAGLPLHRIQIGGLRGKGLATLLKAPFQLIRSLFQARRIMNELRPVCVLGMGGFVTGPGGVAAKLTGAPLVIHEQNAVAGTSNRALAPLADRICEAFPDTFKPTGKRRTTGNPVRSELFLDSSRQIPDGRRLRLLVLGGSLGAEPLNKLLPAALALIPVEQRPELFHQAGRQHHESTADRYREAGVEAEVVPFIEDMARVYAWADLVVCRAGALTVSELAAAGLPALLVPLPHAIDDHQTRNADYLAREGAAFLLPQATTTAADLAARLSEVSMHPEQLEGMAARARRLAKPDATRTVVDICLEVARG.

UDP-N-acetyl-alpha-D-glucosamine is bound by residues 12 to 14 (TGG), Asn-124, Arg-163, Ser-188, Ile-242, 261 to 266 (ALTVSE), and Gln-287.

The protein belongs to the glycosyltransferase 28 family. MurG subfamily.

It is found in the cell inner membrane. It catalyses the reaction di-trans,octa-cis-undecaprenyl diphospho-N-acetyl-alpha-D-muramoyl-L-alanyl-D-glutamyl-meso-2,6-diaminopimeloyl-D-alanyl-D-alanine + UDP-N-acetyl-alpha-D-glucosamine = di-trans,octa-cis-undecaprenyl diphospho-[N-acetyl-alpha-D-glucosaminyl-(1-&gt;4)]-N-acetyl-alpha-D-muramoyl-L-alanyl-D-glutamyl-meso-2,6-diaminopimeloyl-D-alanyl-D-alanine + UDP + H(+). Its pathway is cell wall biogenesis; peptidoglycan biosynthesis. Cell wall formation. Catalyzes the transfer of a GlcNAc subunit on undecaprenyl-pyrophosphoryl-MurNAc-pentapeptide (lipid intermediate I) to form undecaprenyl-pyrophosphoryl-MurNAc-(pentapeptide)GlcNAc (lipid intermediate II). The chain is UDP-N-acetylglucosamine--N-acetylmuramyl-(pentapeptide) pyrophosphoryl-undecaprenol N-acetylglucosamine transferase from Azotobacter vinelandii (strain DJ / ATCC BAA-1303).